The following is a 57-amino-acid chain: UPF0391 membrane protein Nham_2738 (57 aa).

2 helical membrane-spanning segments follow: residues 4–24 and 30–50; these read WVVT…GGLA and IAKI…VVGL.

The protein belongs to the UPF0391 family.

It is found in the cell membrane. This Nitrobacter hamburgensis (strain DSM 10229 / NCIMB 13809 / X14) protein is UPF0391 membrane protein Nham_2738.